Here is a 303-residue protein sequence, read N- to C-terminus: N-acetylmuramic acid 6-phosphate etherase (303 aa).

The SIS domain maps to 60-223 (ATASLQAGGR…STGVMVKLGK (164 aa)). Residue Glu-88 is the Proton donor of the active site. Glu-119 is an active-site residue.

This sequence belongs to the GCKR-like family. MurNAc-6-P etherase subfamily. In terms of assembly, homodimer.

It catalyses the reaction N-acetyl-D-muramate 6-phosphate + H2O = N-acetyl-D-glucosamine 6-phosphate + (R)-lactate. Its pathway is amino-sugar metabolism; 1,6-anhydro-N-acetylmuramate degradation. The protein operates within amino-sugar metabolism; N-acetylmuramate degradation. It functions in the pathway cell wall biogenesis; peptidoglycan recycling. Specifically catalyzes the cleavage of the D-lactyl ether substituent of MurNAc 6-phosphate, producing GlcNAc 6-phosphate and D-lactate. Together with AnmK, is also required for the utilization of anhydro-N-acetylmuramic acid (anhMurNAc) either imported from the medium or derived from its own cell wall murein, and thus plays a role in cell wall recycling. The sequence is that of N-acetylmuramic acid 6-phosphate etherase from Pectobacterium atrosepticum (strain SCRI 1043 / ATCC BAA-672) (Erwinia carotovora subsp. atroseptica).